Consider the following 119-residue polypeptide: Large ribosomal subunit protein bL20 (119 aa).

The protein belongs to the bacterial ribosomal protein bL20 family.

Its function is as follows. Binds directly to 23S ribosomal RNA and is necessary for the in vitro assembly process of the 50S ribosomal subunit. It is not involved in the protein synthesizing functions of that subunit. This Geobacillus kaustophilus (strain HTA426) protein is Large ribosomal subunit protein bL20.